A 326-amino-acid chain; its full sequence is Protein ORF5 in retron Ec67 (326 aa).

The segment at 1 to 24 (MGKSKKNRAAATNQLKHKSQTSAE) is disordered. A compositionally biased stretch (polar residues) spans 10–24 (AATNQLKHKSQTSAE).

The protein belongs to the phage portal family. PBSX subfamily.

This is Protein ORF5 in retron Ec67 from Escherichia coli.